Reading from the N-terminus, the 160-residue chain is Endoribonuclease YbeY (160 aa).

Zn(2+) contacts are provided by His125, His129, and His135.

The protein belongs to the endoribonuclease YbeY family. Zn(2+) serves as cofactor.

It is found in the cytoplasm. In terms of biological role, single strand-specific metallo-endoribonuclease involved in late-stage 70S ribosome quality control and in maturation of the 3' terminus of the 16S rRNA. The protein is Endoribonuclease YbeY of Dehalococcoides mccartyi (strain ATCC BAA-2100 / JCM 16839 / KCTC 5957 / BAV1).